The primary structure comprises 506 residues: Putative amidase (506 aa).

Residues K121 and S196 each act as charge relay system in the active site. Catalysis depends on S220, which acts as the Acyl-ester intermediate.

The protein belongs to the amidase family.

It catalyses the reaction a monocarboxylic acid amide + H2O = a monocarboxylate + NH4(+). The chain is Putative amidase from Synechocystis sp. (strain ATCC 27184 / PCC 6803 / Kazusa).